The sequence spans 134 residues: Profilin-3 (134 aa).

An intrachain disulfide couples Cys-13 to Cys-118. An Involved in PIP2 interaction motif is present at residues 84–100 (AVIRGKKGSGGITIKKT). Thr-114 carries the phosphothreonine modification.

This sequence belongs to the profilin family. As to quaternary structure, occurs in many kinds of cells as a complex with monomeric actin in a 1:1 ratio. Post-translationally, phosphorylated by MAP kinases.

It localises to the cytoplasm. The protein resides in the cytoskeleton. Functionally, binds to actin and affects the structure of the cytoskeleton. At high concentrations, profilin prevents the polymerization of actin, whereas it enhances it at low concentrations. The chain is Profilin-3 from Olea europaea (Common olive).